Reading from the N-terminus, the 496-residue chain is MDCYRTSPSNSWIYTTVILCIFGFFSMMRPSEPFLIPYLSGPDKNLTSEEMTNEIFPVWTYSYLVLLLPVLVLTDYVRYKPVIILQGISFIITWLLLLFGQGVKTMQVVEFFYGMVTATEVAYYAYIYSVVSPEHYQRVSGYCRSVTLVAYTAGSVLAQLLVSLANLSYFYLNVISLASVSVAFLFSLFLPMPKKSMFFHAKPSREIKKSSSVNPVLEETHEGEAPDCEKQKPTSEIPSTSGKLHKGQLNSLKPRNVTVEVFVQWFQDLKECYSSKRLFYWSLWWAFATAGFNQILNYVQILWDYKSPSQDSSIYNGAVEATATFGGAVAAFAVGYVKVNWDLLGELALAVFSVVNAGSLFLMHYTANIWACYAGYLIFKSSYMLLITIAVFQIAVNLSVERYALVFGINTFIALVIQTIITVIVVDQRGLNLPISIQFLVYGSYFAVIAGIFLMRSMYIIYSTKSQKDVQSPAPSENPDMSHPEEESNAIMSTKL.

The Cytoplasmic segment spans residues 1-7 (MDCYRTS). A helical membrane pass occupies residues 8-28 (PSNSWIYTTVILCIFGFFSMM). The Extracellular segment spans residues 29-53 (RPSEPFLIPYLSGPDKNLTSEEMTN). Asn45 carries N-linked (GlcNAc...) asparagine glycosylation. Residues 54-74 (EIFPVWTYSYLVLLLPVLVLT) traverse the membrane as a helical segment. At 75 to 81 (DYVRYKP) the chain is on the cytoplasmic side. The chain crosses the membrane as a helical span at residues 82-102 (VIILQGISFIITWLLLLFGQG). At 103–110 (VKTMQVVE) the chain is on the extracellular side. Residues 111–131 (FFYGMVTATEVAYYAYIYSVV) form a helical membrane-spanning segment. At 132 to 144 (SPEHYQRVSGYCR) the chain is on the cytoplasmic side. A helical membrane pass occupies residues 145–165 (SVTLVAYTAGSVLAQLLVSLA). Asn166 carries an N-linked (GlcNAc...) asparagine glycan. Residues 166-169 (NLSY) are Extracellular-facing. Residues 170–190 (FYLNVISLASVSVAFLFSLFL) traverse the membrane as a helical segment. Over 191-282 (PMPKKSMFFH…YSSKRLFYWS (92 aa)) the chain is Cytoplasmic. The interval 210–248 (SSSVNPVLEETHEGEAPDCEKQKPTSEIPSTSGKLHKGQ) is disordered. Over residues 218–233 (EETHEGEAPDCEKQKP) the composition is skewed to basic and acidic residues. Over residues 234–248 (TSEIPSTSGKLHKGQ) the composition is skewed to polar residues. A helical membrane pass occupies residues 283–303 (LWWAFATAGFNQILNYVQILW). At 304-316 (DYKSPSQDSSIYN) the chain is on the extracellular side. Residues 317–337 (GAVEATATFGGAVAAFAVGYV) traverse the membrane as a helical segment. At 338-342 (KVNWD) the chain is on the cytoplasmic side. The helical transmembrane segment at 343-363 (LLGELALAVFSVVNAGSLFLM) threads the bilayer. Residues 364-375 (HYTANIWACYAG) are Extracellular-facing. Residues 376–396 (YLIFKSSYMLLITIAVFQIAV) traverse the membrane as a helical segment. Topologically, residues 397–405 (NLSVERYAL) are cytoplasmic. Residues 406–426 (VFGINTFIALVIQTIITVIVV) form a helical membrane-spanning segment. Over 427 to 434 (DQRGLNLP) the chain is Extracellular. A helical membrane pass occupies residues 435–455 (ISIQFLVYGSYFAVIAGIFLM). The Cytoplasmic portion of the chain corresponds to 456–496 (RSMYIIYSTKSQKDVQSPAPSENPDMSHPEEESNAIMSTKL). Positions 469-496 (DVQSPAPSENPDMSHPEEESNAIMSTKL) are disordered.

Belongs to the reduced folate carrier (RFC) transporter (TC 2.A.48) family.

The protein localises to the membrane. It catalyses the reaction thiamine(out) + H(+)(in) = thiamine(in) + H(+)(out). The enzyme catalyses pyridoxine(out) + n H(+)(out) = pyridoxine(in) + n H(+)(in). Functionally, mediates high affinity thiamine uptake, probably via a proton anti-port mechanism. Has no folate transport activity. Mediates H(+)-dependent pyridoxine transport. The sequence is that of Thiamine transporter 2 (SLC19A3) from Macaca fascicularis (Crab-eating macaque).